The chain runs to 1846 residues: Brefeldin A-inhibited guanine nucleotide-exchange protein 1 (1846 aa).

Positions 2–224 (YEGKKTKNMF…QEAKQMERER (223 aa)) are DCB; DCB:DCB domain and DCB:HUS domain interaction. The residue at position 52 (Ser52) is a Phosphoserine. Disordered regions lie at residues 217–248 (AKQM…HLRY), 264–302 (DLDP…DQAT), and 347–410 (VSAS…SPGA). A compositionally biased stretch (basic and acidic residues) spans 267–277 (PQTHDVDKSLQ). Residues Ser286, Ser289, Ser290, Ser394, and Ser407 each carry the phosphoserine modification. Residues 391-406 (SVSSNDTQESGNSSGP) are compositionally biased toward polar residues. Residues 554 to 574 (ADAQSVVDIYVNYDCDLNAAN) are HUS; DCB:HUS domain interaction. The interval 631–684 (PNSQTTLGQEKPSEQEISEIKHPETINRYGSLNSLESTSSSGIGSYSTQMSGTD) is disordered. Residues 641-655 (KPSEQEISEIKHPET) are compositionally biased toward basic and acidic residues. The span at 661–681 (SLNSLESTSSSGIGSYSTQMS) shows a compositional bias: low complexity. One can recognise an SEC7 domain in the interval 688-877 (QFEVLKQQKE…SAIYNEIAGK (190 aa)). The Nuclear localization signal (NLS) signature appears at 708–712 (KKPKR). Phosphoserine occurs at positions 1076, 1563, and 1566. The tract at residues 1571–1600 (DSAQPRSSDNRQQAPLVSVSPASEEVSKGR) is disordered. Over residues 1574–1585 (QPRSSDNRQQAP) the composition is skewed to polar residues.

Homodimer. Interacts with ARFGEF2/BIG2; both proteins are probably part of the same or very similar macromolecular complexes. Interacts with FKBP2. Interacts with MYO9B. Interacts with PRKAR1A and PRKAR2A. Interacts with PPP1CC. Interacts with NCL, FBL, NUP62 and U3 small nucleolar RNA. Interacts with DPY30. Interacts with PDE3A. Interacts with KANK1. Interacts with TBC1D22A and TBC1D22B. Phosphorylated. In vitro phosphorylated by PKA reducing its GEF activity and dephosphorylated by phosphatase PP1.

The protein resides in the cytoplasm. It localises to the perinuclear region. The protein localises to the golgi apparatus. It is found in the trans-Golgi network. Its subcellular location is the nucleus. The protein resides in the nucleolus. It localises to the nucleus matrix. The protein localises to the membrane. Its activity is regulated as follows. Inhibited by brefeldin A. Functionally, promotes guanine-nucleotide exchange on ARF1 and ARF3. Promotes the activation of ARF1/ARF3 through replacement of GDP with GTP. Involved in vesicular trafficking. Required for the maintenance of Golgi structure; the function may be independent of its GEF activity. Required for the maturation of integrin beta-1 in the Golgi. Involved in the establishment and persistence of cell polarity during directed cell movement in wound healing. Proposed to act as A kinase-anchoring protein (AKAP) and may mediate crosstalk between Arf and PKA pathways. Inhibits GAP activity of MYO9B probably through competitive RhoA binding. The function in the nucleus remains to be determined. This is Brefeldin A-inhibited guanine nucleotide-exchange protein 1 (Arfgef1) from Rattus norvegicus (Rat).